The following is a 300-amino-acid chain: Transcription factor E2F5 (300 aa).

Residues Gly2 to Gly73 mediate DNA binding. The segment at Leu31–Leu53 is leucine-zipper. Positions Asp36 to Gly73 match the DEF box motif. The tract at residues Ala74 to Ile170 is dimerization. Positions Ser191–Gly250 are disordered. Residues Asp203–Thr221 show a composition bias toward low complexity. The span at Arg235–Glu246 shows a compositional bias: polar residues. The interval Thr242–Tyr300 is transactivation. The RBL2 association stretch occupies residues Asp277–Asp294.

The protein belongs to the E2F/DP family. As to quaternary structure, component of the DRTF1/E2F transcription factor complex. Binds cooperatively with DP-1 to E2F sites. Interaction with retinoblastoma protein RB1 or proteins RBL1 and RBL2 inhibits the E2F transactivation domain. Component of the DREAM complex (also named LINC complex) at least composed of E2F4, E2F5, LIN9, LIN37, LIN52, LIN54, MYBL1, MYBL2, RBL1, RBL2, RBBP4, TFDP1 and TFDP2. The complex exists in quiescent cells where it represses cell cycle-dependent genes. It dissociates in S phase when LIN9, LIN37, LIN52 and LIN54 form a subcomplex that binds to MYBL2. As to expression, found in placenta followed by kidney, lung and brain.

The protein resides in the nucleus. Functionally, transcriptional activator that binds to E2F sites, these sites are present in the promoter of many genes whose products are involved in cell proliferation. May mediate growth factor-initiated signal transduction. It is likely involved in the early responses of resting cells to growth factor stimulation. Specifically required for multiciliate cell differentiation: together with MCIDAS and E2F5, binds and activate genes required for centriole biogenesis. The chain is Transcription factor E2F5 (E2f5) from Rattus norvegicus (Rat).